The following is a 387-amino-acid chain: MSEMNFETLQTFRRELHQIPETALEEFKTHDYLLTKLKSWQQDYMTIKTVEALPTAILVYFQGTNPVRTIGYRTDIDALPIQEATGLDFASQHPGKMHACGHDVHMTMALGLAQYFSQHQPKDNLIIFFQPAEEAESGGKVAYDMGLFEGKWRPDEFYGIHDQPNLPAGTLSTLAGTLFAGTAELKVDVIGTGGHAAYPHLAKDPIVIAAELIIQLQTVVSRSVDPIAGGVVSVGVINGGFANNVIPDQVHFEGTVRSMTRTGLETMLTRIRKIAEGLAIANEVTINVSLESGSYLPVENDPILATQVINFMQKQSDINFELAQPAMTGEDFGYLLQHIPGVMLWLGVNDSHPLHSAQLTIDESAILPGYNALKSFLLWRMATSEEK.

Aspartate 75 is a catalytic residue. Catalysis depends on glutamate 134, which acts as the Proton acceptor.

This sequence belongs to the peptidase M20A family. N-acetyldiaminopimelate deacetylase subfamily.

It carries out the reaction N-acetyl-(2S,6S)-2,6-diaminopimelate + H2O = (2S,6S)-2,6-diaminopimelate + acetate. Its pathway is amino-acid biosynthesis; L-lysine biosynthesis via DAP pathway; LL-2,6-diaminopimelate from (S)-tetrahydrodipicolinate (acetylase route): step 3/3. Functionally, catalyzes the conversion of N-acetyl-diaminopimelate to diaminopimelate and acetate. In Leuconostoc citreum (strain KM20), this protein is N-acetyldiaminopimelate deacetylase.